A 417-amino-acid polypeptide reads, in one-letter code: MAEVRNYTFNFGPQHPAAHGVLRLIVEVDGEVIQRIDPHIGLLHRATEKLAESKPYNQTIGYMDRLDYVSMMANEHGYVLAIEKLLGIEPPIRAKYIRTMFDEITRILNHLLWLGAHALDVGAMTVFLYCFREREDLMDCYEAVSGARMHATYYRPGGVYRDLPDSMPKYKPSRWHNEKAVKKMNEAREGSLLDFIWDFTARFPNLIDEYESLLTDNRIWKQRTVGIGVVSAERALQLGFTGPMLRASGVEWDLRKKQPYAAYDRVDFDIPIGREGDCYDRYLVRIEEMRQSNRIIRQCVEWLRKNPGSVMIDDYKIVPPQREVMKRDMEALIHHFKLFTEGYIVPEGEAYAAVEQPKGEFGVYIVSDGANKPYRVKVRAASYPHLAAMNEMCRGHMIADLVAIISSIDIVFGEIDR.

Belongs to the complex I 49 kDa subunit family. In terms of assembly, NDH-1 is composed of 14 different subunits. Subunits NuoB, C, D, E, F, and G constitute the peripheral sector of the complex.

The protein localises to the cell inner membrane. It carries out the reaction a quinone + NADH + 5 H(+)(in) = a quinol + NAD(+) + 4 H(+)(out). Functionally, NDH-1 shuttles electrons from NADH, via FMN and iron-sulfur (Fe-S) centers, to quinones in the respiratory chain. The immediate electron acceptor for the enzyme in this species is believed to be ubiquinone. Couples the redox reaction to proton translocation (for every two electrons transferred, four hydrogen ions are translocated across the cytoplasmic membrane), and thus conserves the redox energy in a proton gradient. This Coxiella burnetii (strain RSA 331 / Henzerling II) protein is NADH-quinone oxidoreductase subunit D.